The sequence spans 1120 residues: ISWI chromatin-remodeling complex ATPase ISW2 (1120 aa).

The segment covering 1-16 (MTTQQEEQRSDTKNSK) has biased composition (basic and acidic residues). Disordered regions lie at residues 1–58 (MTTQ…VEDR) and 129–153 (LSKS…EDAE). Phosphoserine is present on residues Ser-17 and Ser-19. The segment covering 47–58 (LSDKEIYTVEDR) has biased composition (basic and acidic residues). The region spanning 196 to 361 (ISLHENKLSG…WALLNFLLPD (166 aa)) is the Helicase ATP-binding domain. 209–216 (DEMGLGKT) serves as a coordination point for ATP. The DEAH box motif lies at 312–315 (DEAH). The 152-residue stretch at 494-645 (ILDKLLKRLK…QLVIQQGTGK (152 aa)) folds into the Helicase C-terminal domain. Disordered stretches follow at residues 764–783 (GGGS…PRAP) and 828–853 (NEGS…KGHE). Position 831 is a phosphoserine (Ser-831). The SANT domain occupies 886–938 (KAFTNWNKRDFMAFINACAKYGRDDMENIKKSIDSKTPEEVEVYAKIFWERLK). The segment at 1062–1120 (PDANKKKRSRTSATREDTPLSQNESTRASTVPNLPTTMVTNQKDTNDHVDKRTKIDQEA) is disordered. A Phosphothreonine modification is found at Thr-1079. A compositionally biased stretch (polar residues) spans 1080-1104 (PLSQNESTRASTVPNLPTTMVTNQK). A Phosphoserine modification is found at Ser-1082. Residues 1105-1120 (DTNDHVDKRTKIDQEA) are compositionally biased toward basic and acidic residues.

Belongs to the SNF2/RAD54 helicase family. ISWI subfamily. As to quaternary structure, component of the ISW2 complex, which at least consists of ISW2, ITC1, DLS1 and DPB4. May form a stable subcomplex with ITC1.

The protein localises to the nucleus. In terms of biological role, catalytic component of the ISW2 complex, which acts in remodeling the chromatin by catalyzing an ATP-dependent alteration in the structure of nucleosomal DNA. The ISW2 complex is involved in coordinating transcriptional repression and in inheritance of telomeric silencing. It is involved in repression of MAT a-specific genes, INO1, and early meiotic genes during mitotic growth dependent upon transcription factor UME6 and in a parallel pathway to the RPD3-SIN3 histone deacetylase complex. In Saccharomyces cerevisiae (strain ATCC 204508 / S288c) (Baker's yeast), this protein is ISWI chromatin-remodeling complex ATPase ISW2 (ISW2).